An 807-amino-acid chain; its full sequence is 1-phosphatidylinositol 4,5-bisphosphate phosphodiesterase delta-4 (807 aa).

A PH domain is found at Leu16–Asp124. Residues Lys26 to Pro53 form a substrate binding region. 3 EF-hand domains span residues Gln134–Glu169, Met170–Arg205, and Thr203–Glu237. Asp147, Asn149, Asp151, Arg153, Glu158, Asp183, Ser187, Asp189, and Glu194 together coordinate Ca(2+). Residues Glu213–Asp243 carry the GBA motif. The PI-PLC X-box domain occupies Gln290 to Lys435. His305 is a catalytic residue. Ca(2+) contacts are provided by Asn306, Glu335, and Asp337. The active site involves His350. A Ca(2+)-binding site is contributed by Glu384. Substrate is bound by residues Lys433 and Lys435. The tract at residues Val442 to Lys490 is disordered. The span at Asp443–Asp462 shows a compositional bias: acidic residues. Over residues Leu470 to Ala482 the composition is skewed to polar residues. The 117-residue stretch at Leu538–Arg654 folds into the PI-PLC Y-box domain. Substrate contacts are provided by Ser567 and Arg594. In terms of domain architecture, C2 spans Arg654–Ser781. Ca(2+)-binding residues include Asp697, Asn721, Asp750, and Tyr751. A PDZ-binding motif is present at residues His776 to Leu779.

Interacts with GRIP1. Interacts (via GBA motif) with guanine nucleotide-binding protein G(i) alpha subunit GNAI3 (inactive GDP-bound form)l low-affinity interaction. Ca(2+) is required as a cofactor.

It is found in the membrane. It localises to the nucleus. Its subcellular location is the cytoplasm. The protein localises to the endoplasmic reticulum. The enzyme catalyses a 1,2-diacyl-sn-glycero-3-phospho-(1D-myo-inositol-4,5-bisphosphate) + H2O = 1D-myo-inositol 1,4,5-trisphosphate + a 1,2-diacyl-sn-glycerol + H(+). It catalyses the reaction a 1,2-diacyl-sn-glycero-3-phospho-(1D-myo-inositol) + H2O = 1D-myo-inositol 1-phosphate + a 1,2-diacyl-sn-glycerol + H(+). Its function is as follows. Hydrolyzes the phosphatidylinositol 4,5-bisphosphate (PIP2) to generate 2 second messenger molecules diacylglycerol (DAG) and inositol 1,4,5-trisphosphate (IP3). DAG mediates the activation of protein kinase C (PKC), while IP3 releases Ca(2+) from intracellular stores. Required for acrosome reaction in sperm during fertilization, probably by acting as an important enzyme for intracellular Ca(2+) mobilization in the zona pellucida-induced acrosome reaction. May play a role in cell growth. Modulates the liver regeneration in cooperation with nuclear PKC. Overexpression up-regulates the Erk signaling pathway and proliferation. In Mus musculus (Mouse), this protein is 1-phosphatidylinositol 4,5-bisphosphate phosphodiesterase delta-4.